We begin with the raw amino-acid sequence, 509 residues long: Aspartic proteinase oryzasin-1 (509 aa).

A signal peptide spans 1–24 (MGTRSVALVLLAAVLLQALLPASA). The propeptide at 25-67 (AEGLVRIALKKRPIDENSRVAARLSGEEGARRLGLRGANSLGG) is activation peptide. The region spanning 85–506 (YFGEIGVGTP…DYGKMRVGFA (422 aa)) is the Peptidase A1 domain. Residue D103 is part of the active site. C116 and C122 form a disulfide bridge. N-linked (GlcNAc...) asparagine glycosylation occurs at N252. A disulfide bond links C281 and C285. Residue D290 is part of the active site. Residues 315 to 420 (VVSQECKTVV…NQLCDKLPSP (106 aa)) form the Saposin B-type domain. 4 disulfides stabilise this stretch: C320–C414, C345–C386, C351–C383, and C428–C465. N-linked (GlcNAc...) asparagine glycosylation is present at N400.

Belongs to the peptidase A1 family.

The protein resides in the vacuole. Its function is as follows. Involved in the breakdown of propeptides of storage proteins in protein-storage vacuoles. The protein is Aspartic proteinase oryzasin-1 of Oryza sativa subsp. japonica (Rice).